A 236-amino-acid chain; its full sequence is Small ribosomal subunit protein eS6 (236 aa).

It belongs to the eukaryotic ribosomal protein eS6 family. In terms of assembly, component of the small ribosomal subunit. Mature ribosomes consist of a small (40S) and a large (60S) subunit. The 40S subunit contains about 32 different proteins and 1 molecule of RNA (18S). The 60S subunit contains 45 different proteins and 3 molecules of RNA (25S, 5.8S and 5S).

The protein localises to the cytoplasm. Component of the ribosome, a large ribonucleoprotein complex responsible for the synthesis of proteins in the cell. The small ribosomal subunit (SSU) binds messenger RNAs (mRNAs) and translates the encoded message by selecting cognate aminoacyl-transfer RNA (tRNA) molecules. The large subunit (LSU) contains the ribosomal catalytic site termed the peptidyl transferase center (PTC), which catalyzes the formation of peptide bonds, thereby polymerizing the amino acids delivered by tRNAs into a polypeptide chain. The nascent polypeptides leave the ribosome through a tunnel in the LSU and interact with protein factors that function in enzymatic processing, targeting, and the membrane insertion of nascent chains at the exit of the ribosomal tunnel. RPS6A is involved in nucleolar processing of pre-18S ribosomal RNA and ribosome assembly. This Candida albicans (strain SC5314 / ATCC MYA-2876) (Yeast) protein is Small ribosomal subunit protein eS6 (RPS6A).